We begin with the raw amino-acid sequence, 169 residues long: Ureidoglycolate lyase (169 aa).

It belongs to the ureidoglycolate lyase family. Homodimer. The cofactor is Ni(2+).

It catalyses the reaction (S)-ureidoglycolate = urea + glyoxylate. It participates in nitrogen metabolism; (S)-allantoin degradation. Functionally, catalyzes the catabolism of the allantoin degradation intermediate (S)-ureidoglycolate, generating urea and glyoxylate. Involved in the utilization of allantoin as nitrogen source. The chain is Ureidoglycolate lyase from Pseudomonas aeruginosa (strain LESB58).